Here is a 633-residue protein sequence, read N- to C-terminus: Ankyrin repeat and SOCS box protein 2 (633 aa).

The 20-residue stretch at 26–45 (SEDELVQMAIEQSLADKTRG) folds into the UIM domain. ANK repeat units lie at residues 102-131 (APVD…NLSE), 135-165 (EGWL…VIDQ), 169-198 (QEET…EPDI), 202-231 (SRET…DTNH), 235-264 (RGWT…KVEA), 268-297 (YGIT…DINT), 301-330 (DSAS…DANK), 334-363 (DGML…RTRV), 366-395 (SGIS…DVNA), 408-437 (RRSS…DPNR), 438-467 (DVIN…NIDA), and 474-502 (TAFP…NGEP). S369 bears the Phosphoserine mark. The 55-residue stretch at 579–633 (EDWAVIKEKAEPPRPLAHLCRLRVRKAIGKYRIKLLDTLPLPGRLIRYLKYENTQ) folds into the SOCS box domain.

It belongs to the ankyrin SOCS box (ASB) family. Component of a probable ECS E3 ubiquitin-protein ligase complex which contains CUL5, either RBX1 or RNF7/RBX2, Elongin BC complex (ELOB and ELOC) and ASB2. Interacts with SKP2. Through its interaction with SKP2, likely to bridge the formation of dimeric E3-ubiquitin-protein ligase complexes composed of an ECS complex and an SCF(SKP2) complex. Interacts with JAK2; the interaction targets JAK2 for Notch-mediated proteasomal degradation. Interacts with TCF3/E2A; the interaction is mediated by SKP2 and targets TCF3 for Notch-mediated proteasomal degradation. Interacts with DES. Monoubiquitinated.

The protein localises to the cytoplasm. It localises to the cytoskeleton. The protein resides in the stress fiber. It is found in the myofibril. Its subcellular location is the sarcomere. The protein localises to the z line. Its pathway is protein modification; protein ubiquitination. Its function is as follows. Substrate-recognition component of a SCF-like ECS (Elongin-Cullin-SOCS-box protein) E3 ubiquitin-protein ligase complex which mediates the ubiquitination and subsequent proteasomal degradation of target proteins. Mediates Notch-induced ubiquitination and degradation of substrates including E2A and JAK2. Required during embryonic heart development for complete heart looping. Required for cardiomyocyte differentiation. Involved in myogenic differentiation and targets filamin FLNB for proteasomal degradation but not filamin FLNA. Also targets DES for proteasomal degradation. Acts as a negative regulator of skeletal muscle mass. In Bos taurus (Bovine), this protein is Ankyrin repeat and SOCS box protein 2.